We begin with the raw amino-acid sequence, 498 residues long: Diacylglycerol O-acyltransferase 1A (498 aa).

Residues 1–67 (MAISDEPETV…ANSQPQQKQD (67 aa)) are disordered. The next 7 helical transmembrane spans lie at 102–122 (HAGL…RLII), 146–166 (WPLF…FIVE), 178–198 (VVVV…VLVI), 203–223 (SAFL…LKLV), 253–273 (YPYN…TLCY), 295–315 (LIIF…PIVQ), and 342–362 (VWLC…AELL). The short motif at 369–375 (FYQDWWN) is the FYXDWWN motif element. The next 3 helical transmembrane spans lie at 410–430 (AVAL…CIAV), 432–452 (CHIF…LVFI), and 465–485 (VGNM…CVLL). His424 is an active-site residue.

It belongs to the membrane-bound acyltransferase family. Sterol o-acyltransferase subfamily. As to expression, highly expressed in flowers and pods. Expressed at low levels in roots, stems and leaves.

The protein resides in the endoplasmic reticulum membrane. It catalyses the reaction an acyl-CoA + a 1,2-diacyl-sn-glycerol = a triacyl-sn-glycerol + CoA. It participates in glycerolipid metabolism; triacylglycerol biosynthesis. Its function is as follows. Major contributor to triacylglycerol (TAG) synthesis and oil accumulation in developing seeds. Catalyzes the acylation of the sn-3 hydroxy group of sn-1,2-diacylglycerol using acyl-CoA. Has a marked preference for oleoyl-CoA (18:1) and sn-1,2-dioleoylglycerol over vernoloyl-CoA and sn-1,2-divernoloylglycerol. Can use oleoyl-CoA, linoleoyl-CoA and linolenoyl-CoA as substrates. The polypeptide is Diacylglycerol O-acyltransferase 1A (Glycine max (Soybean)).